Consider the following 157-residue polypeptide: Transcriptional repressor NrdR (157 aa).

The disordered stretch occupies residues 1 to 22 (MRCPKCGATKSSVIDSRQAEEG). A zinc finger spans residues 3-34 (CPKCGATKSSVIDSRQAEEGNTIRRRRECDEC). Residues 49-139 (LVVVKKDGTR…VYRSFKDVSE (91 aa)) form the ATP-cone domain.

The protein belongs to the NrdR family. The cofactor is Zn(2+).

In terms of biological role, negatively regulates transcription of bacterial ribonucleotide reductase nrd genes and operons by binding to NrdR-boxes. The chain is Transcriptional repressor NrdR from Streptococcus pneumoniae (strain Hungary19A-6).